The following is a 211-amino-acid chain: Uridine kinase (211 aa).

12–19 serves as a coordination point for ATP; sequence GGSGGGKT.

The protein belongs to the uridine kinase family.

It localises to the cytoplasm. It carries out the reaction uridine + ATP = UMP + ADP + H(+). The catalysed reaction is cytidine + ATP = CMP + ADP + H(+). It participates in pyrimidine metabolism; CTP biosynthesis via salvage pathway; CTP from cytidine: step 1/3. It functions in the pathway pyrimidine metabolism; UMP biosynthesis via salvage pathway; UMP from uridine: step 1/1. The protein is Uridine kinase of Streptococcus thermophilus (strain CNRZ 1066).